A 165-amino-acid polypeptide reads, in one-letter code: Type IV major pilin protein PilE1 (165 aa).

Residues 1–7 constitute a propeptide, leader sequence; the sequence is MNTLQKG. Position 8 is an N-methylphenylalanine (Phe8). A helical transmembrane segment spans residues 8–28; the sequence is FTLIELMIVIAIVGILAAVAL. O-linked (DADDGlc) serine glycosylation is present at Ser70. Ser75 bears the O-(2-aminoethylphosphoryl)serine; alternate mark. The residue at position 75 (Ser75) is an O-(2-cholinephosphoryl)serine; alternate. Ser75 is subject to Phosphoserine; alternate. Ser101 is subject to O-(sn-1-glycerophosphoryl)serine; partial. Cysteines 128 and 158 form a disulfide. Positions 137 to 153 are enriched in basic and acidic residues; the sequence is DDTVADAKDGKEIDTKH. The tract at residues 137–165 is disordered; it reads DDTVADAKDGKEIDTKHLPSTCRDNFDAK.

The protein belongs to the N-Me-Phe pilin family. The pili are polar flexible filaments of about 5.4 nanometers diameter and 2.5 micrometers average length; they consist of only a single polypeptide chain arranged in a helical configuration of five subunits per turn in the assembled pilus. The O-linked glycan identified as Gal-GlcNAc disaccharide in PubMed:7477282 and PubMed:10048019 is now identified as either a hexosyl-diacetamidotrideoxyhexoside (DATDHex) by mass spectrometry in PubMed:15249686, or alpha-D-galactopyranosyl-(1-&gt;3)-2,4-diacetamido-2,4-dideoxy-beta-D-glucopyranoside (DADDGlc) by X-ray diffraction in PubMed:16949362. It is not clear whether there is a chemical difference in the glycosylation of the two derivatives of strain MS11 used in these experiments, or not. In terms of processing, in some MS11 derivative strains, Ser-75 is modified to O-(2-aminoethylphosphoryl)serine, and in some other derivatives that can be secondarily modified to O-(2-cholinephosphoryl)serine by N-methylation.

Its subcellular location is the fimbrium. The protein localises to the membrane. Major component of the type IV pilus (T4P) that plays a role in cellular adherence, microcolony formation, resistance to neutrophil mediated killing, twitching motility as well as transformation. Mediates the attachment and the formation of bacterial microcolonies on host epithelial cells. Mechanistically, pili retractation induces host NF-kappa-B activation in infected cells, which is temporally associated with the formation of gonococcal microcolonies. The protein is Type IV major pilin protein PilE1 (pilE1) of Neisseria gonorrhoeae.